Here is a 465-residue protein sequence, read N- to C-terminus: Adenosine 3'-phospho 5'-phosphosulfate transporter 1 (465 aa).

10 consecutive transmembrane segments (helical) span residues 13–33 (LVIC…SDLL), 61–81 (FLKL…GFLI), 142–162 (AVQL…WGVL), 185–205 (QFLV…YLQW), 270–290 (SYEY…MSGS), 299–319 (VTTL…SFTA), 339–359 (GVNL…GGFM), 370–390 (KFVF…LFIY), 391–407 (HTID…IMTL), and 424–444 (ISLL…LRVY).

It belongs to the nucleotide-sugar transporter family. SLC35B subfamily. As to expression, expressed throughout embryogenesis. During oogenesis, it is expressed strongly in the nurse cells of the germline. Maternally expressed at the syncytial blastoderm stage. Zygotically expressed, from after germ-band elongation in the invaginating salivary gland placodes. Remains expressed predominantly in this tissue throughout embryogenesis, but low-level expression may also be present throughout the embryo.

It localises to the golgi apparatus membrane. Its function is as follows. Mediates the transport of adenosine 3'-phospho 5'-phosphosulfate (PAPS), from cytosol into Golgi. PAPS is a universal sulfuryl donor for sulfation events that take place in the Golgi. Required for the dorsoventral patterning, suggesting that it mediates the transport of the sulfate donor required for the sulfotransferase activity of pip (pipe). This is Adenosine 3'-phospho 5'-phosphosulfate transporter 1 (sll) from Drosophila melanogaster (Fruit fly).